The sequence spans 367 residues: Probable protein phosphatase 2C 67 (367 aa).

The tract at residues 1–79 is disordered; the sequence is MAHQKREATS…DEKAATNSNV (79 aa). Residues 31-46 are compositionally biased toward basic and acidic residues; it reads AEKEHILTSDASHETN. The PPM-type phosphatase domain occupies 91 to 365; it reads EADAAEDKGC…DNCTAVLIVF (275 aa). Mn(2+) is bound by residues aspartate 131, glycine 132, aspartate 312, and aspartate 356.

The protein belongs to the PP2C family. Mg(2+) is required as a cofactor. It depends on Mn(2+) as a cofactor.

The catalysed reaction is O-phospho-L-seryl-[protein] + H2O = L-seryl-[protein] + phosphate. It carries out the reaction O-phospho-L-threonyl-[protein] + H2O = L-threonyl-[protein] + phosphate. In Oryza sativa subsp. japonica (Rice), this protein is Probable protein phosphatase 2C 67.